The following is an 83-amino-acid chain: Kappa-ctenitoxin-Pn1a (83 aa).

Residues 1–21 (MWFKIQVLVLAITLITLGIQA) form the signal peptide. The propeptide occupies 22-37 (EPNSSPNNPLIVEEDR). 4 disulfide bridges follow: Cys-40-Cys-55, Cys-47-Cys-60, Cys-54-Cys-71, and Cys-62-Cys-69. The propeptide occupies 78 to 83 (LFGFGK).

The protein belongs to the neurotoxin 02 (plectoxin) family. Expressed by the venom gland.

It localises to the secreted. Its function is as follows. Antagonist of L-type calcium channels (Cav1/CACNA1). In GH3 neuroendocrinal cell line, it reversibly inhibits the A-type potassium current but does not block other potassium currents or calcium channels. Shows an important acetylcholine-mediated antiarrhythmogenic effect in isolated hearts. In vivo, causes paralysis in the posterior limbs and gradual decreases in movement and aggression during 24 hours at dose levels of 5 ug per mouse. The chain is Kappa-ctenitoxin-Pn1a from Phoneutria nigriventer (Brazilian armed spider).